Consider the following 409-residue polypeptide: Elongation factor Tu (409 aa).

The 205-residue stretch at 10-214 (KPHANIGTIG…EVDAYIPTPE (205 aa)) folds into the tr-type G domain. The G1 stretch occupies residues 19–26 (GHVDHGKT). 19–26 (GHVDHGKT) contacts GTP. Residue Thr-26 coordinates Mg(2+). The tract at residues 60 to 64 (GITIN) is G2. Residues 81 to 84 (DCPG) are G3. GTP is bound by residues 81-85 (DCPGH) and 136-139 (NKED). The interval 136–139 (NKED) is G4. Residues 174–176 (SAL) form a G5 region.

The protein belongs to the TRAFAC class translation factor GTPase superfamily. Classic translation factor GTPase family. EF-Tu/EF-1A subfamily. Monomer.

The protein resides in the cytoplasm. It carries out the reaction GTP + H2O = GDP + phosphate + H(+). GTP hydrolase that promotes the GTP-dependent binding of aminoacyl-tRNA to the A-site of ribosomes during protein biosynthesis. This is Elongation factor Tu from Synechococcus elongatus (strain ATCC 33912 / PCC 7942 / FACHB-805) (Anacystis nidulans R2).